Here is a 242-residue protein sequence, read N- to C-terminus: Transcriptional activator protein RaiR (242 aa).

Positions 177-242 (KVADLPRLSR…EQLLGPRRSN (66 aa)) constitute an HTH luxR-type domain. Positions 201–220 (AKQICARLSISVSAVQLYLA) form a DNA-binding region, H-T-H motif.

The protein belongs to the autoinducer-regulated transcriptional regulatory protein family.

This Rhizobium etli protein is Transcriptional activator protein RaiR (raiR).